A 291-amino-acid chain; its full sequence is Probable L-ascorbate peroxidase 3, peroxisomal (291 aa).

Residue His41 is the Proton acceptor of the active site. Residues 114-133 (YVPGRRDSSDSPEEGRLPDA) form a disordered region. Residues 116-133 (PGRRDSSDSPEEGRLPDA) are compositionally biased toward basic and acidic residues. His161 serves as a coordination point for heme b. K(+)-binding residues include Thr162, Thr178, and Asp185. The chain crosses the membrane as a helical span at residues 263–283 (LLMQTAAGVAVAAAVVAWAYL).

The protein belongs to the peroxidase family. Ascorbate peroxidase subfamily. Requires heme b as cofactor. In terms of tissue distribution, expressed in stems.

The protein resides in the peroxisome membrane. It catalyses the reaction L-ascorbate + H2O2 = L-dehydroascorbate + 2 H2O. Plays a key role in hydrogen peroxide removal. The polypeptide is Probable L-ascorbate peroxidase 3, peroxisomal (Oryza sativa subsp. japonica (Rice)).